The primary structure comprises 326 residues: Serine protease 38 (326 aa).

Positions 1-32 (MAAPASVMGPLGPSALGLLLLLLVVAPPRVAA) are cleaved as a signal peptide. A propeptide spans 33–59 (LVHRQPENQGISLTGSVACGRPSMEGK) (activation peptide). The region spanning 60-293 (ILGGVPAPER…FSKWICDNIE (234 aa)) is the Peptidase S1 domain. A disulfide bridge connects residues Cys-85 and Cys-101. His-100 acts as the Charge relay system in catalysis. Asn-125 is a glycosylation site (N-linked (GlcNAc...) asparagine). The active-site Charge relay system is Asp-150. 3 cysteine pairs are disulfide-bonded: Cys-183–Cys-251, Cys-214–Cys-230, and Cys-241–Cys-269. The active-site Charge relay system is the Ser-245.

The protein belongs to the peptidase S1 family.

It is found in the secreted. The polypeptide is Serine protease 38 (PRSS38) (Homo sapiens (Human)).